We begin with the raw amino-acid sequence, 328 residues long: Stress response kinase A (328 aa).

Asp-201 acts as the Proton acceptor in catalysis. Residues Asn-206 and Asp-217 each coordinate Mg(2+). Residue Asp-217 is part of the active site.

Belongs to the SrkA/RdoA protein kinase family. In terms of assembly, monomer. Requires Mg(2+) as cofactor.

Its subcellular location is the cytoplasm. The catalysed reaction is L-seryl-[protein] + ATP = O-phospho-L-seryl-[protein] + ADP + H(+). It catalyses the reaction L-threonyl-[protein] + ATP = O-phospho-L-threonyl-[protein] + ADP + H(+). Its function is as follows. A protein kinase that phosphorylates Ser and Thr residues. Probably acts to suppress the effects of stress linked to accumulation of reactive oxygen species. Probably involved in the extracytoplasmic stress response. Also has a role in LPS synthesis, through regulation of the galETK expression. In terms of biological role, a protein kinase that phosphorylates Ser and Thr residues. Probably acts to suppress the effects of stress linked to accumulation of reactive oxygen species. Probably involved in the extracytoplasmic stress response. In Shigella flexneri, this protein is Stress response kinase A.